Consider the following 267-residue polypeptide: 27 kDa core protein (267 aa).

It belongs to the chordopoxvirinae D3 family.

It localises to the virion. Its function is as follows. Late protein which is part of a large complex required for early virion morphogenesis. This complex participates in the formation of virosomes and the incorporation of virosomal contents into nascent immature virions. This chain is 27 kDa core protein, found in Canarypox virus (CNPV).